Consider the following 61-residue polypeptide: Large ribosomal subunit protein uL30 (61 aa).

It belongs to the universal ribosomal protein uL30 family. As to quaternary structure, part of the 50S ribosomal subunit.

The chain is Large ribosomal subunit protein uL30 from Clostridioides difficile (strain 630) (Peptoclostridium difficile).